Reading from the N-terminus, the 199-residue chain is Chaperone protein TorD (199 aa).

This sequence belongs to the TorD/DmsD family. TorD subfamily.

The protein resides in the cytoplasm. In terms of biological role, involved in the biogenesis of TorA. Acts on TorA before the insertion of the molybdenum cofactor and, as a result, probably favors a conformation of the apoenzyme that is competent for acquiring the cofactor. The polypeptide is Chaperone protein TorD (Escherichia coli O139:H28 (strain E24377A / ETEC)).